A 279-amino-acid polypeptide reads, in one-letter code: Movement protein (279 aa).

This sequence belongs to the cucumovirus movement protein family.

The protein localises to the host cell junction. It localises to the host plasmodesma. In terms of biological role, transports viral genome to neighboring plant cells directly through plasmosdesmata, without any budding. The movement protein allows efficient cell to cell propagation, by bypassing the host cell wall barrier. Acts by forming a tubular structure at the host plasmodesmata, enlarging it enough to allow free passage of virion capsids. In Cucumber mosaic virus (strain As) (CMV), this protein is Movement protein.